We begin with the raw amino-acid sequence, 524 residues long: Cytokinin dehydrogenase 4 (524 aa).

Positions 1–26 are cleaved as a signal peptide; sequence MTNTLCLSLITLITLFISLTPTLIKS. Asn-39 and Asn-58 each carry an N-linked (GlcNAc...) asparagine glycan. In terms of domain architecture, FAD-binding PCMH-type spans 60–249; that stretch reads TDENPGAVLC…TRARIALDHA (190 aa). 3 residues coordinate FAD: Ala-104, Gly-106, and Gly-108. A Pros-8alpha-FAD histidine modification is found at His-109. Residues Ser-110 and Gln-114 each coordinate FAD. The N-linked (GlcNAc...) asparagine glycan is linked to Asn-124. FAD is bound by residues Asp-173, Ser-178, Ser-184, Ile-188, and Ile-239. Asn-411 carries N-linked (GlcNAc...) asparagine glycosylation. Tyr-482, Ser-517, and Gln-520 together coordinate FAD.

It belongs to the oxygen-dependent FAD-linked oxidoreductase family. The cofactor is FAD. In terms of tissue distribution, expressed in trichomes and in developing stomata of young growing leaves. Strong expression in stipules and in the root cap, but not detected in the root meristem.

It is found in the secreted. The protein localises to the extracellular space. It catalyses the reaction N(6)-dimethylallyladenine + A + H2O = 3-methyl-2-butenal + adenine + AH2. Catalyzes the oxidation of cytokinins, a family of N(6)-substituted adenine derivatives that are plant hormones, where the substituent is an isopentenyl group. This chain is Cytokinin dehydrogenase 4 (CKX4), found in Arabidopsis thaliana (Mouse-ear cress).